A 52-amino-acid chain; its full sequence is uncharacterized protein (52 aa).

This is an uncharacterized protein from Caenorhabditis elegans.